A 462-amino-acid polypeptide reads, in one-letter code: MPSCTASTMPGMICKNPDLEFDSLQPCFYPDEDDFYFGGPDSTPPGEDIWKKFELLPTPPLSPSRAFPEHSPEPSNWATEMLLPEADLWGNPAEEDAFGLGGLGGLTPNPVILQDCMWSGFSAREKLERAVNEKLQHGHGPPGASSSCPAPGVGASSSGGRALGGSASAGRTGATLPTDLSHPAAECVDPAVVFPFPVNKRESASVPAAPTSAPATSAVVTSVSVPAVAPVAAPARGSGRPANSGEHKALSTSGEDTLSDSDDEDDEEEDEEEEIDVVTVEKRRSSSNNKAVTTFTITVRPKTSALGLGRAQPGELILKRCVPIHQQHNYAAPSPYVESEDAPPQKKIKSEASPRPLKSVVPPKAKSLSPRNSDSEDSERRRNHNILERQRRNDLRSSFLTLRDHVPELVKNEKAAKVVILKKATEYVHALQANEHQLLLEKEKLQARQQQLLKKIEHARTC.

The segment at 19 to 47 (LEFDSLQPCFYPDEDDFYFGGPDSTPPGE) is interaction with AURKA. Residues 61–90 (LSPSRAFPEHSPEPSNWATEMLLPEADLWG) are interaction with AURKA and FBXW7. Residues 76-85 (NWATEMLLPE) carry the 9aaTAD motif. 3 disordered regions span residues 133-177 (EKLQ…ATLP), 232-290 (AAPA…SNNK), and 332-390 (APSP…LERQ). Positions 138–174 (GHGPPGASSSCPAPGVGASSSGGRALGGSASAGRTGA) are enriched in low complexity. Acidic residues predominate over residues 257 to 276 (TLSDSDDEDDEEEDEEEEID). Ser259 and Ser261 each carry phosphoserine; by CK2. Residues 379–431 (ERRRNHNILERQRRNDLRSSFLTLRDHVPELVKNEKAAKVVILKKATEYVHAL) form the bHLH domain. The leucine-zipper stretch occupies residues 431–452 (LQANEHQLLLEKEKLQARQQQL).

As to quaternary structure, efficient DNA binding requires dimerization with another bHLH protein. Binds DNA as a heterodimer with MAX. Interacts with KDM5A, KDM5B and HUWE1. Interacts with MYCNOS. Interacts with AURKA; interaction is phospho-independent and triggers AURKA activation; AURKA competes with FBXW7 for binding to unphosphorylated MYCN but not for binding to unphosphorylated MYCN. Interacts with FBXW7; FBXW7 competes with AURKA for binding to unphosphorylated MYCN but not for binding to phosphorylated MYCN. Post-translationally, phosphorylated by GSK3-beta which may promote its degradation. Phosphorylated by AURKA.

The protein localises to the nucleus. Functionally, positively regulates the transcription of MYCNOS in neuroblastoma cells. The polypeptide is N-myc proto-oncogene protein (Mycn) (Rattus norvegicus (Rat)).